A 156-amino-acid polypeptide reads, in one-letter code: MTEYLGTFNGSKLKIAIIVARFNDLVTKRLLDGAFQTLAQNGVSKEDIDIYWVPGAFEIPRVAQKISQKGNVDGIITLGAVVRGETSHYESVCSGVTSGIAQIALEGKVPVMFGVLMTENMEQALNRAGGKAGNKGSECATGLLEMIDIEQTIDRE.

5-amino-6-(D-ribitylamino)uracil-binding positions include Phe22, 56–58 (AFE), and 80–82 (AVV). 85–86 (ET) lines the (2S)-2-hydroxy-3-oxobutyl phosphate pocket. Catalysis depends on His88, which acts as the Proton donor. Position 113 (Phe113) interacts with 5-amino-6-(D-ribitylamino)uracil. Residue Arg127 participates in (2S)-2-hydroxy-3-oxobutyl phosphate binding.

The protein belongs to the DMRL synthase family.

The enzyme catalyses (2S)-2-hydroxy-3-oxobutyl phosphate + 5-amino-6-(D-ribitylamino)uracil = 6,7-dimethyl-8-(1-D-ribityl)lumazine + phosphate + 2 H2O + H(+). Its pathway is cofactor biosynthesis; riboflavin biosynthesis; riboflavin from 2-hydroxy-3-oxobutyl phosphate and 5-amino-6-(D-ribitylamino)uracil: step 1/2. In terms of biological role, catalyzes the formation of 6,7-dimethyl-8-ribityllumazine by condensation of 5-amino-6-(D-ribitylamino)uracil with 3,4-dihydroxy-2-butanone 4-phosphate. This is the penultimate step in the biosynthesis of riboflavin. In Pediococcus pentosaceus (strain ATCC 25745 / CCUG 21536 / LMG 10740 / 183-1w), this protein is 6,7-dimethyl-8-ribityllumazine synthase.